A 534-amino-acid polypeptide reads, in one-letter code: Allene oxide synthase 1, chloroplastic (534 aa).

Disordered stretches follow at residues 1–31 (MAST…SSYR) and 43–71 (EIPP…LPAQ). The transit peptide at 1 to 69 (MASTSLSLPS…SPPVKQAKLP (69 aa)) directs the protein to the chloroplast. Composition is skewed to low complexity over residues 17-31 (SHTS…SSYR) and 43-62 (EIPP…SSPP). Lys149, His180, and Lys184 together coordinate heme b. 2 residues coordinate (13S)-hydroperoxy-(9Z,11E)-octadecadienoate: Asn337 and Lys343. Asn337 is a (13S)-hydroperoxy-(9Z,11E,15Z)-octadecatrienoate binding site. The heme b site is built by Lys485 and Cys487.

This sequence belongs to the cytochrome P450 family. Requires heme b as cofactor. Expressed in flowers. Detected in stems and roots, but not in leaves and fruits under non-inducing conditions.

The protein localises to the plastid. Its subcellular location is the chloroplast. It catalyses the reaction (13S)-hydroperoxy-(9Z,11E,15Z)-octadecatrienoate = (9Z,13S,15Z)-12,13-epoxyoctadeca-9,11,15-trienoate + H2O. The catalysed reaction is (13S)-hydroperoxy-(9Z,11E)-octadecadienoate = (9Z,13S)-12,13-epoxyoctadeca-9,11-dienoate + H2O. Functionally, cytochrome P450 of the CYP74A subfamily involved in the biosynthesis of jasmonic acid from lipoxygenase-derived hydroperoxides of free fatty acids. Catalyzes the synthesis of unstable allene oxide, which is further converted spontaneously by hydrolysis or cyclization. Can use 13S-hydroperoxy-9(Z),11(E),15(Z)-octadecatrienoic acid (13-HPOT) and 13S-hydroperoxy-9(Z),11(E)-octadecadienoic acid (13-HPOD) as substrates. The chain is Allene oxide synthase 1, chloroplastic from Solanum lycopersicum (Tomato).